Consider the following 531-residue polypeptide: Achacin (531 aa).

An N-terminal signal peptide occupies residues 1–22 (MLLLNSALFILCLVCWLPGTSS). Residues 23 to 29 (SRVLTRR) constitute a propeptide that is removed on maturation. N-linked (GlcNAc...) asparagine glycans are attached at residues N112, N150, N308, and N392.

This sequence to A.kurodai aplysianin-A. As to quaternary structure, homodimer. Collar tissue.

In terms of biological role, antibacterial glycoprotein. The protein is Achacin of Lissachatina fulica (Giant African land snail).